The chain runs to 2692 residues: MALALWVFALLGSACLVSANIFEYQVDAQPLRPCELQRERAFLKRADYVPQCAEDGSFQTVQCKKDGGSCWCVDADGREVPGSRQPGRPVACLSFCQLQKQQILLSSYINSTATSYLPQCQDSGAYAPVQCDVRREQCWCVDAEGMEVYGTRRLGRPARCPGSCEIRNRRLLHGVGDKSPPQCSADGTFLPVQCKFVNTTDMMFFDLVHSYNRFPDAFVTFSSFRSRFPEVSGYCHCADSQGRELAGTGLELLLDEIYDTVFAGLDLASSFTETTLYRILQRRFLAVQLVTSGRFRCPTKCEVERFAATSFGHPYVPSCGRDGEYQAGQCQQEGLCWCVDAQGQEIPGTRRPSEPLSCAEGQSCPSERRRALSRLHLGPSGYSGQRGSFLAAERGPVSQTVPSFAASCPLPLKELFVESGILQPVVQGQKKEVTAATESLLKEGLRGIFPSRELARLALQFTANPKRLQQNLFGGRFLANVGQFNLSGALGTRGTFNFSHFFQQLGLPGFQKRQALADPAKSLSVGLDSNPATEAPEALKMGVAMNKTVVGSFGFEVNLQENRNALTFLSSLLELPEFLLFLQHAISVPEDIARDLGDVMEMALSSQGCEQTPGSLFVPSCTAEGSYEDVQCFAGECWCVDARGRELAGSRARGGRPRCPTACEKQRERMQSLLGRQPAGSSVFVPSCTREGHFLPVQCFSSDCYCVDADGQPIPGTRTAPGEPKQCPTPCQLQAEQAFLGTVRGLISNPSEPPVLSSIYIPQCSASGQWRRVQCDGPPEQAFEWYERWGAQSRSGQELTPAELLMKIMSYREAASGSFRLFIQNLYEAGQQGIFPGLARYSSLQDVPLAVLEGNLTQATGNILLEPYLFWQILNGQLPRYPGPYSDFSAPLAHLDLRSCWCVDEAGRKLEGTQTEPSKVPACPGSCEEVKLRVLQFIKEAEEIVMVSNSSQFPLGESFLAAKGIRLTDEELALPPLSPSRETFLEKFLSGSDYAIRLAAQSTFSFYQRRRVALSDAPRTSGPLQPYPYVPQCDALGSWEPVQCHAATGHCWCVDGEGAYLPASLAARSPQVLQCPTPCETSRVRGLLSAWKQAGSQVRPSPKDLFIPACTETGEFARLQASEASTWCVDPASGEAMPPGTNSSAPCPGLCEVLQRGVPSRRASPGTTPACRAEDGGFAPVQCDPAQGSCWCVLGSGEEVPGTRVAGSQPACERPQLWQTIQTRGQFQLQLPPGKVCSADYAGLLPTFQVVILDELTARGFCRIQVTTARTPVSIPVCDDSTVRVGCLSLDRLGVNVTWTLRLEDAPPASLPDLRDIEEALAGKDLVGRFADLIQSGTFQLHLDSRTFPADPSIHFLQGNSLGTSPRTRFGCVEGSRQVPATSNTSQDPLGCVRCPEGSYFQEEQCIPCPAGFYQEQTGSLACAPCPAGTTTTSVGAFSQTHCVTACQRDEAGLQCDQDGQYRASQRDRASGKAFCVDSEGRRLPWSETQAPLVDAQCLMMRKFEKLPESKVIFTADVAVLGSIVPDSESSLMQCLADCARDEACSFLTVSLEGSEGSCDFYAWTSDNIACTSSGQEEDALGTSKATSLGSLTCQVKVRPGDGVAPAVYLKKGQEFATIGQKRFEQTGFQNALSGLYSPVVFSASGASLTEAHLFCLLACDRDSCCDGFILTQVQGGPIICGLLSSPDVLLCHVRDWRDPSEAQADATCPGVTYDQDSRQGTLRLGGQEFKSLTPREGARDTFTSFQQVYLWKDSDMGSRSESMGCRRDMQPRPESPEETDLTAELFSPVDLNQVIVSENRSLPSQQHRLFKHLFSLQQAHLWCLSRCVQEPSFCQLAEITDSSPLYLTCTLYPEAQVCDDVMEASPRGCRRILPRRPNALFQRRVVLQDRVKNFYTRLPFQKLTGLSIRHKVPMADKAISSGFFECERLCDVDPCCTGFGFLNVSQLKGGEVTCLTLNSLGLQTCSEENGGSWRLLACGSPDTEVRTYPFGWYQKPAVQNDAPSFCPSAALPPVPEKVALDSWQPLPPSSVVVDPSIRNFDVAHISTAAVGDFSAARERCLLECSRHQACLVTTLQTRPGAVRCMFYADTQSCTHSLQAQNCQLLLREEATHIYRKPDIPLPGLGSSAPTVTIATHGQLLGTSQAIQLGASWKQVDQFLGVPYAAPPLAESRFRAPEPLNWTGTWDATKPRASCWQPGIRPATAPGVSEDCLYLSVFVPQSLTPNSSVLVFFHNGAEGPLAMAVDGSFLAAVGNLIVVTASYRTGVFGFLSSGSSEVSGNWGLLDQVAALTWVQTHIGVFGGDPRRVALAADRGGADVAGIHLLTSRATNSRLFRRAVLMGGSVLSPAAVIRPDRAQQQAAALAKEVGCPPRPSQKWYPASAGACQPPNDAQMQLLAVSGPFHYWGPVVDGQLLREAPARALQRPPRAKLDLLIGSSQDDGLIDRAKAVKRFEESQGRTSSKTAFYQALQNSLGGEAGDPGVQAAATWYYSLEHDTDDYASFSRALEAATRDYFIICPVIDMASHWARTARGNVFMYHAPESYSHGSLELLADVRYAFGLPFYPAYEGQFTQEEKSLSLKIMQYFSNFVRSGNPNYPHEFSRKAPEFAAPWPDFVPGDGAESYKELSVLLPNRQGLKKADCSFWSKYILSLKASADEAEDGPLAESEEEDRPGLTEDLLGLPELASKSYSK.

A signal peptide spans 1-19 (MALALWVFALLGSACLVSA). Tyr-24 is modified (iodotyrosine; alternate). Position 24 is a sulfotyrosine; alternate (Tyr-24). Position 24 is a thyroxine; alternate (Tyr-24). A Triiodothyronine; alternate modification is found at Tyr-24. Thyroglobulin type-1 domains lie at 31-92 (LRPC…PVAC), 93-160 (LSFC…PARC), and 161-248 (PGSC…LAGT). Intrachain disulfides connect Cys-34/Cys-52, Cys-63/Cys-70, Cys-72/Cys-92, Cys-96/Cys-120, Cys-131/Cys-138, Cys-140/Cys-160, Cys-164/Cys-183, and Cys-194/Cys-235. Tyr-108 carries the post-translational modification Iodotyrosine. Asn-110 carries N-linked (GlcNAc...) asparagine glycosylation. At Tyr-149 the chain carries Iodotyrosine; alternate. Tyr-149 carries the post-translational modification Diiodotyrosine; alternate. Asn-198 carries an N-linked (GlcNAc...) asparagine glycan. 2 positions are modified to iodotyrosine: Tyr-234 and Tyr-258. Residues 298 to 358 (PTKCEVERFA…TRRPSEPLSC (61 aa)) enclose the Thyroglobulin type-1 4 domain. 9 disulfide bridges follow: Cys-301–Cys-319, Cys-330–Cys-336, Cys-338–Cys-358, Cys-364–Cys-621, Cys-408–Cys-609, Cys-632–Cys-637, Cys-639–Cys-659, Cys-663–Cys-688, and Cys-699–Cys-704. N-linked (GlcNAc...) asparagine glycosylation is found at Asn-485, Asn-497, and Asn-546. 3 consecutive Thyroglobulin type-1 domains span residues 606-659 (SQGC…RPRC), 660-727 (PTAC…PKQC), and 728-923 (PTPC…VPAC). An Iodotyrosine; alternate modification is found at Tyr-705. Tyr-705 is modified (thyroxine; alternate). The residue at position 705 (Tyr-705) is a Triiodothyronine; alternate. Diiodotyrosine; alternate is present on Tyr-705. 13 cysteine pairs are disulfide-bonded: Cys-706–Cys-727, Cys-731–Cys-764, Cys-775–Cys-900, Cys-902–Cys-923, Cys-927–Cys-1033, Cys-1044–Cys-1051, Cys-1053–Cys-1079, Cys-1128–Cys-1147, Cys-1151–Cys-1171, Cys-1183–Cys-1190, Cys-1192–Cys-1212, Cys-1237–Cys-1287, and Cys-1262–Cys-1278. Residue Asn-749 is glycosylated (N-linked (GlcNAc...) asparagine). An Iodotyrosine modification is found at Tyr-786. N-linked (GlcNAc...) asparagine glycosylation is present at Asn-855. Residue Tyr-868 is modified to Iodotyrosine; alternate. Position 868 is a diiodotyrosine; alternate (Tyr-868). Tyr-885 is subject to Diiodotyrosine. An N-linked (GlcNAc...) asparagine glycan is attached at Asn-949. Tyr-994 is modified (iodotyrosine; alternate). Diiodotyrosine; alternate is present on Tyr-994. Thyroglobulin type-1 domains are found at residues 1021–1079 (SGPL…PTPC), 1088–1147 (LSAW…SAPC), and 1148–1212 (PGLC…QPAC). N-linked (GlcNAc...) asparagine glycosylation occurs at Asn-1142. At Tyr-1241 the chain carries Iodotyrosine. Thyroxine is present on Tyr-1241. Asn-1296 and Asn-1384 each carry an N-linked (GlcNAc...) asparagine glycan. Cystine bridges form between Cys-1372/Cys-1392, Cys-1395/Cys-1406, Cys-1409/Cys-1423, Cys-1426/Cys-1443, Cys-1447/Cys-1456, Cys-1476/Cys-1498, Cys-1535/Cys-1559, Cys-1539/Cys-1545, Cys-1571/Cys-1594, Cys-1656/Cys-1681, Cys-1660/Cys-1666, Cys-1665/Cys-1766, and Cys-1692/Cys-1709. Type II repeat units lie at residues 1389–1402 (PLGC…SYFQ), 1403–1419 (EEQC…EQTG), and 1420–1436 (SLAC…TSVG). Iodotyrosine; alternate is present on Tyr-1400. Tyr-1400 carries the diiodotyrosine; alternate modification. Residues 1444–1498 (VTACQRDEAGLQCDQDGQYRASQRDRASGKAFCVDSEGRRLPWSETQAPLVDAQC) enclose the Thyroglobulin type-1 11 domain. One copy of the Type IIIA repeat lies at 1535-1655 (CLADCARDEA…GASLTEAHLF (121 aa)). The Type IIIB repeat unit spans residues 1656 to 1823 (CLLACDRDSC…LFSLQQAHLW (168 aa)). Asn-1800 carries N-linked (GlcNAc...) asparagine glycosylation. 10 cysteine pairs are disulfide-bonded: Cys-1824/Cys-1850, Cys-1828/Cys-1835, Cys-1859/Cys-1870, Cys-1927/Cys-1955, Cys-1931/Cys-1937, Cys-1936/Cys-2007, Cys-1966/Cys-1979, Cys-2061/Cys-2085, Cys-2065/Cys-2071, and Cys-2094/Cys-2103. The stretch at 1824-1926 (CLSRCVQEPS…DKAISSGFFE (103 aa)) is one Type IIIA repeat. The stretch at 1927–2060 (CERLCDVDPC…VGDFSAARER (134 aa)) is one Type IIIB repeat. An N-linked (GlcNAc...) asparagine glycan is attached at Asn-1944. A Type IIIA repeat occupies 2061 to 2118 (CLLECSRHQACLVTTLQTRPGAVRCMFYADTQSCTHSLQAQNCQLLLREEATHIYRKP). Tyr-2115 carries the post-translational modification Iodotyrosine. Residues 2119–2692 (DIPLPGLGSS…PELASKSYSK (574 aa)) are cholinesterase-like (ChEL). Asn-2181 and Asn-2226 each carry an N-linked (GlcNAc...) asparagine glycan. Position 2467 is a thyroxine (Tyr-2467). An Iodotyrosine; alternate modification is found at Tyr-2500. A Thyroxine; alternate modification is found at Tyr-2500. Tyr-2500 carries the post-translational modification Triiodothyronine; alternate. A Diiodotyrosine; alternate modification is found at Tyr-2500. 2 positions are modified to iodotyrosine: Tyr-2514 and Tyr-2544. Cys-2518 and Cys-2642 are disulfide-bonded. Position 2624 is a diiodotyrosine (Tyr-2624). Positions 2658–2671 (EAEDGPLAESEEED) are enriched in acidic residues. The disordered stretch occupies residues 2658–2692 (EAEDGPLAESEEEDRPGLTEDLLGLPELASKSYSK). Tyr-2690 carries the post-translational modification Iodotyrosine; alternate. Residue Tyr-2690 is modified to Thyroxine; alternate. Tyr-2690 bears the Triiodothyronine; alternate mark. Tyr-2690 bears the Diiodotyrosine; alternate mark.

The protein belongs to the type-B carboxylesterase/lipase family. As to quaternary structure, monomer. Homodimer (via ChEL region); occurs in the endoplasmic reticulum and is required for export to the Golgi apparatus. Homooligomer; disulfide-linked; stored in this form in the thyroid follicle lumen. Post-translationally, iodinated on tyrosine residues by TPO. There are 4 pairs of iodinated tyrosines used for coupling: acceptor Tyr-24 is coupled to donor Tyr-149 or Tyr-234, acceptor Tyr-2500 is coupled to donor Tyr-2467, acceptor Tyr-2690 in monomer 1 is coupled to donor Tyr-2690 in monomer 2 and acceptor Tyr-1241 in monomer 1 is coupled to donor Tyr-108 in monomer 2. Sulfated tyrosines are desulfated during iodination. In terms of processing, undergoes sequential proteolysis by cathepsins to release thyroxine (T4) and triiodothyronine (T3) hormones. In the thyroid follicle lumen, cross-linked TG (storage form) is solubilized by limited proteolysis mediated by cathepsins CTSB and/or CTSL. Partially cleaved TG is further processed by CTSK/cathepsin K and/or CTSL resulting in the release of T4. Following endocytosis, further processing occurs leading to the release of T3 and more T4 hormones. Expressed in thyroid epithelial cells.

The protein resides in the secreted. In terms of biological role, acts as a substrate for the production of iodinated thyroid hormones thyroxine (T4) and triiodothyronine (T3). The synthesis of T3 and T4 involves iodination of selected tyrosine residues of TG/thyroglobulin followed by their oxidative coupling. Following TG re-internalization and lysosomal-mediated proteolysis, T3 and T4 are released from the polypeptide backbone leading to their secretion into the bloodstream. One dimer produces 7 thyroid hormone molecules. The polypeptide is Thyroglobulin (Sus scrofa (Pig)).